We begin with the raw amino-acid sequence, 207 residues long: Guanylate kinase (207 aa).

Positions 7 to 185 (GIVLVLCAPS…AYDELRAAYI (179 aa)) constitute a Guanylate kinase-like domain. Residue 14–21 (APSGTGKT) participates in ATP binding.

It belongs to the guanylate kinase family.

The protein localises to the cytoplasm. The enzyme catalyses GMP + ATP = GDP + ADP. Essential for recycling GMP and indirectly, cGMP. This chain is Guanylate kinase, found in Nitratidesulfovibrio vulgaris (strain ATCC 29579 / DSM 644 / CCUG 34227 / NCIMB 8303 / VKM B-1760 / Hildenborough) (Desulfovibrio vulgaris).